Consider the following 228-residue polypeptide: Sensory transduction protein RegX3 (228 aa).

The Response regulatory domain maps to 3–116 (SVLIVEDEES…ELIARIRAVL (114 aa)). D52 is modified (4-aspartylphosphate). A DNA-binding region (ompR/PhoB-type) is located at residues 129–228 (DGVLEAGPVR…VRGLGYKLEG (100 aa)).

Phosphorylated by SenX3.

Member of the two-component regulatory system SenX3/RegX3 involved in stress response. The system is involved in phosphate starvation response. Once phosphorylated by SenX3, activates the expression of the alkaline phosphatase phoA, the high-affinity phosphate transporter pstSCAB, phnDCE, phnF and senX3. May act as a negative regulator of NhaA. Acts by binding to a DNA motif consisting of an inverted repeat. The protein is Sensory transduction protein RegX3 of Mycolicibacterium smegmatis (strain ATCC 700084 / mc(2)155) (Mycobacterium smegmatis).